The primary structure comprises 775 residues: Kinesin-like protein KIF3B (775 aa).

One can recognise a Kinesin motor domain in the interval Ser9–Ile341. ATP is bound at residue Gly97 to Thr104. A disordered region spans residues Lys372–Ile419. Residues Ser374–Arg385 show a composition bias toward basic residues. The segment covering Gly389 to Val413 has biased composition (acidic residues). The stretch at Leu501 to Leu591 forms a coiled coil. The interval Phe716–Lys775 is disordered. Over residues Ala718–Ser734 the composition is skewed to low complexity. Basic residues predominate over residues Lys735–Lys746. Over residues Ser756 to Leu765 the composition is skewed to low complexity.

It belongs to the TRAFAC class myosin-kinesin ATPase superfamily. Kinesin family. As to quaternary structure, heterodimer of KIF3A and KIF3B. KIF3A/KIF3B heterodimer interacts with KIFAP3 forming a heterotrimeric (KIF3A/KIF3B/KIFAP3) complex.

It is found in the cytoplasm. Its subcellular location is the cytoskeleton. It localises to the cell projection. The protein localises to the cilium. The protein resides in the dendritic spine. Functionally, microtubule-based molecular motor that transport intracellular cargos, such as vesicles, organelles and protein complexes. Uses ATP hydrolysis to generate force to bind and move along the microtubule. Plays a role in cilia formation. Required for photoreceptor development. This is Kinesin-like protein KIF3B from Danio rerio (Zebrafish).